Here is a 210-residue protein sequence, read N- to C-terminus: Floral homeotic protein FBP1 (210 aa).

Residues 3 to 57 (RGKIEIKRIENSSNRQVTYSKRRNGILKKAKEISVLCDARVSVIIFASSGKMHEF) enclose the MADS-box domain. The region spanning 82–173 (HENLDNEINK…QLEIATMNRN (92 aa)) is the K-box domain.

In terms of tissue distribution, petals.

It localises to the nucleus. Its function is as follows. Probable transcription factor. The chain is Floral homeotic protein FBP1 (FBP1) from Petunia hybrida (Petunia).